The following is a 190-amino-acid chain: Ubiquinol-cytochrome c reductase iron-sulfur subunit (190 aa).

Residues Phe-18 to Val-39 traverse the membrane as a helical segment. A Rieske domain is found at Gly-95–Lys-188. Residues Cys-132, His-134, Cys-152, and His-155 each contribute to the [2Fe-2S] cluster site. A disulfide bond links Cys-137 and Cys-154.

The protein belongs to the Rieske iron-sulfur protein family. The main subunits of complex b-c1 are: cytochrome b, cytochrome c1 and the Rieske protein. The cofactor is [2Fe-2S] cluster.

It is found in the cell membrane. It catalyses the reaction a quinol + 2 Fe(III)-[cytochrome c](out) = a quinone + 2 Fe(II)-[cytochrome c](out) + 2 H(+)(out). Functionally, component of the ubiquinol-cytochrome c reductase complex (complex III or cytochrome b-c1 complex), which is a respiratory chain that generates an electrochemical potential coupled to ATP synthesis. In Paracoccus denitrificans, this protein is Ubiquinol-cytochrome c reductase iron-sulfur subunit (petA).